A 398-amino-acid polypeptide reads, in one-letter code: Chalcone synthase 1 (398 aa).

58–65 (KFKRMCDK) provides a ligand contact to CoA. The active-site Acyl-thioester intermediate is Cys167. Residues Thr200 and 219-220 (GD) contribute to the substrate site. Position 311 (Ala311) interacts with CoA.

Belongs to the thiolase-like superfamily. Chalcone/stilbene synthases family. In terms of assembly, homodimer.

It carries out the reaction (E)-4-coumaroyl-CoA + 3 malonyl-CoA + 3 H(+) = 2',4,4',6'-tetrahydroxychalcone + 3 CO2 + 4 CoA. It functions in the pathway secondary metabolite biosynthesis; flavonoid biosynthesis. Functionally, the primary product of this enzyme is 4,2',4',6'-tetrahydroxychalcone (also termed naringenin-chalcone or chalcone) which can under specific conditions spontaneously isomerize into naringenin. The protein is Chalcone synthase 1 (CHS1) of Oryza sativa subsp. indica (Rice).